The chain runs to 887 residues: Cytoplasmic aconitate hydratase (887 aa).

Residues glutamine 84 and 204 to 206 (DSH) contribute to the substrate site. The [4Fe-4S] cluster site is built by cysteine 436, cysteine 502, and cysteine 505. Residues arginine 535, arginine 540, arginine 697, and 777–778 (SR) contribute to the substrate site.

It belongs to the aconitase/IPM isomerase family. Interacts with gex-3. The cofactor is [4Fe-4S] cluster.

Its subcellular location is the cytoplasm. The protein resides in the cytosol. The catalysed reaction is citrate = D-threo-isocitrate. In terms of biological role, catalyzes the isomerization of citrate to isocitrate via cis-aconitate. Has probably no RNA-binding activity. The polypeptide is Cytoplasmic aconitate hydratase (aco-1) (Caenorhabditis elegans).